Here is a 361-residue protein sequence, read N- to C-terminus: Phosphoserine aminotransferase (361 aa).

Positions 9 and 42 each coordinate L-glutamate. Residues alanine 76–arginine 77, tryptophan 103, threonine 153, aspartate 173, and glutamine 196 contribute to the pyridoxal 5'-phosphate site. At lysine 197 the chain carries N6-(pyridoxal phosphate)lysine. Asparagine 238–threonine 239 is a binding site for pyridoxal 5'-phosphate.

This sequence belongs to the class-V pyridoxal-phosphate-dependent aminotransferase family. SerC subfamily. In terms of assembly, homodimer. Pyridoxal 5'-phosphate serves as cofactor.

The protein localises to the cytoplasm. The enzyme catalyses O-phospho-L-serine + 2-oxoglutarate = 3-phosphooxypyruvate + L-glutamate. It catalyses the reaction 4-(phosphooxy)-L-threonine + 2-oxoglutarate = (R)-3-hydroxy-2-oxo-4-phosphooxybutanoate + L-glutamate. It participates in amino-acid biosynthesis; L-serine biosynthesis; L-serine from 3-phospho-D-glycerate: step 2/3. It functions in the pathway cofactor biosynthesis; pyridoxine 5'-phosphate biosynthesis; pyridoxine 5'-phosphate from D-erythrose 4-phosphate: step 3/5. Functionally, catalyzes the reversible conversion of 3-phosphohydroxypyruvate to phosphoserine and of 3-hydroxy-2-oxo-4-phosphonooxybutanoate to phosphohydroxythreonine. This Wigglesworthia glossinidia brevipalpis protein is Phosphoserine aminotransferase.